We begin with the raw amino-acid sequence, 645 residues long: Octopamine receptor Oamb (645 aa).

The Extracellular segment spans residues 1-25; it reads MNETECEDLIKSVKWTEPANLISLA. Asn2 is a glycosylation site (N-linked (GlcNAc...) asparagine). A helical transmembrane segment spans residues 26–46; sequence VLEFINVLVIGGNCLVIAAVF. Residues 47 to 56 lie on the Cytoplasmic side of the membrane; sequence CSNKLRSVTN. Residues 57-77 form a helical membrane-spanning segment; the sequence is FFIVNLAVADLLVGLAVLPFS. The Extracellular portion of the chain corresponds to 78-94; sequence ATWEVFKVWIFGDLWCR. Cys93 and Cys287 are disulfide-bonded. Residues 95-115 traverse the membrane as a helical segment; it reads IWLAVDVWMCTASILNLCAIS. Over 116–138 the chain is Cytoplasmic; the sequence is LDRYVAVTRPVTYPSIMSTKKAK. Residues 139-159 traverse the membrane as a helical segment; that stretch reads SLIAGIWVLSFFICFPPLVGW. At 160 to 295 the chain is on the extracellular side; that stretch reads KDQKAVIQPT…KCELTNDRGY (136 aa). Asn174 carries N-linked (GlcNAc...) asparagine glycosylation. Residues 190-212 are disordered; the sequence is QLGLDSIKDQGEASLPPSPPHIG. Residues 296–316 form a helical membrane-spanning segment; sequence VLYSALGSFYIPMFVMLFFYW. Over 317–520 the chain is Cytoplasmic; it reads RIYRAAVRTT…FRMETKAAKT (204 aa). Disordered regions lie at residues 358–386 and 479–500; these read GRGS…PSPE and RQSN…KKMG. Positions 369-385 are enriched in low complexity; the sequence is SNGSTQSTTTTLGTPSP. Residues 521–541 traverse the membrane as a helical segment; that stretch reads LAIIVGMFIFCWCPFFTMYII. At 542–551 the chain is on the extracellular side; the sequence is RPFCQDCVDP. The chain crosses the membrane as a helical span at residues 552–572; that stretch reads LLFSVLFWLGYCNSAVNPMIY. The Cytoplasmic portion of the chain corresponds to 573–645; the sequence is ALFSKDFRFA…HHSEMSNDPR (73 aa). A disordered region spans residues 621–645; it reads TPSAAAHSFGDESELHHSEMSNDPR. Residues 629-645 show a composition bias toward basic and acidic residues; that stretch reads FGDESELHHSEMSNDPR.

This sequence belongs to the G-protein coupled receptor 1 family. In terms of tissue distribution, highly enriched in mushroom body neuropil and in the ellipsoid body (at protein level). Expressed in oviduct epithelium (at protein level). Expressed in the adult and larval brain, thoracic and abdominal ganglia, terminal cells of the larval tracheal system, muscle, mature eggs and reproductive system.

The protein localises to the cell membrane. In terms of biological role, receptor for octopamine (OA) which is a neurotransmitter, neurohormone and neuromodulator in invertebrates. Stimulates intracellular accumulation of cAMP and Ca(2+) following ligand binding. Required for ovulation. Following activation on mature follicle cells by OA, induces activity of the metalloprotease Mmp2 which leads to breakdown of the posterior follicle wall, resulting in ovulation. Ligand binding probably also leads to activation of CamKII which is also required for ovulation. Modulates sleep/wake behavior by acting in neurons of the pars intercerebralis to promote wakefulness. Plays a role in courtship conditioning where the courtship behavior of males rejected by already mated females is inhibited with further females. Required in the mushroom body for appetitive olfactory learning. Specifically conveys the short-term reinforcing effects of sweet taste. In insulin-producing cells of the brain, plays a role in inhibiting transcription of insulin-like peptide Ilp3. Also plays a role in social behavior by modulating male agression. This chain is Octopamine receptor Oamb, found in Drosophila melanogaster (Fruit fly).